The sequence spans 419 residues: MARAKFERSKPHVNIGTIGHVDHGKTTLTAAITMALAALGGATGKKYDEIDSAPEEKARGITINTAHVEYETPNRHYAHVDCPGHADYVKNMITGAAQMDGAILVVSGADGPMPQTKEHILLAKQVGVPNMVVFLNKEDQVDDAELLELVELEVRETLDKYEFPGDEIPIVSGSALLALEALVENPKIQRGDNKWVDKIFDLMDKVDEYIPTPDRETDKPFLLAVEDVLSITGRGTVATGRVERGTLKVGENVELIGLKDTKATVVTGLEMFKKTLDETMAGDNVGVLLRGIQKKDVERGMVLAKPGSITPHTKFEAQVYVLTKEEGGRHSPFLVGYQPQFFIRTTDVTGKIVSFTHIQMKNPSSVAEEHSNKMAMPGDRIEVTVQLIYPVAVEKGMRFAIREGGRTVGAGVVTNILEE.

Residues 10-214 (KPHVNIGTIG…KVDEYIPTPD (205 aa)) enclose the tr-type G domain. The G1 stretch occupies residues 19-26 (GHVDHGKT). Position 19–26 (19–26 (GHVDHGKT)) interacts with GTP. Threonine 26 is a Mg(2+) binding site. The tract at residues 60–64 (GITIN) is G2. The tract at residues 81–84 (DCPG) is G3. GTP-binding positions include 81–85 (DCPGH) and 136–139 (NKED). The tract at residues 136-139 (NKED) is G4. Positions 174 to 176 (SAL) are G5.

The protein belongs to the TRAFAC class translation factor GTPase superfamily. Classic translation factor GTPase family. EF-Tu/EF-1A subfamily.

The protein localises to the plastid. It localises to the chloroplast. It catalyses the reaction GTP + H2O = GDP + phosphate + H(+). In terms of biological role, GTP hydrolase that promotes the GTP-dependent binding of aminoacyl-tRNA to the A-site of ribosomes during protein biosynthesis. The chain is Elongation factor Tu, chloroplastic (tufA) from Tetradesmus obliquus (Green alga).